The primary structure comprises 319 residues: NADH-quinone oxidoreductase subunit H 1 (319 aa).

Helical transmembrane passes span 5–25, 78–98, 109–129, 147–167, 179–199, 214–234, 238–258, 262–282, and 294–314; these read ILTAIISTTLIMALLVAAGVF, LAPAVAATPVLAGFGVVAFGE, VMFLLGMMGLTAYAVVLGALA, LAYEAFLGLSMLGVVMIAGSL, VWFIVLQPIGAALFTLGGIAA, LVGGYITEYTGMSFGLFFLGE, ILLVSAFAVTLFFGGWLGPWL, IWFGLKTGVIAAMFVWIRAAL, and AWKVALPLALANVLITGFIVV.

It belongs to the complex I subunit 1 family. As to quaternary structure, NDH-1 is composed of 14 different subunits. Subunits NuoA, H, J, K, L, M, N constitute the membrane sector of the complex.

It localises to the cell inner membrane. The enzyme catalyses a quinone + NADH + 5 H(+)(in) = a quinol + NAD(+) + 4 H(+)(out). Its function is as follows. NDH-1 shuttles electrons from NADH, via FMN and iron-sulfur (Fe-S) centers, to quinones in the respiratory chain. The immediate electron acceptor for the enzyme in this species is believed to be ubiquinone. Couples the redox reaction to proton translocation (for every two electrons transferred, four hydrogen ions are translocated across the cytoplasmic membrane), and thus conserves the redox energy in a proton gradient. This subunit may bind ubiquinone. The sequence is that of NADH-quinone oxidoreductase subunit H 1 from Rhodopseudomonas palustris (strain BisA53).